We begin with the raw amino-acid sequence, 120 residues long: Chaperonin GroEL (120 aa).

Position 23–27 (23–27 (DGTTT)) interacts with ATP.

Belongs to the chaperonin (HSP60) family. As to quaternary structure, forms a cylinder of 14 subunits composed of two heptameric rings stacked back-to-back. Interacts with the co-chaperonin GroES.

The protein resides in the cytoplasm. It catalyses the reaction ATP + H2O + a folded polypeptide = ADP + phosphate + an unfolded polypeptide.. Its function is as follows. Together with its co-chaperonin GroES, plays an essential role in assisting protein folding. The GroEL-GroES system forms a nano-cage that allows encapsulation of the non-native substrate proteins and provides a physical environment optimized to promote and accelerate protein folding. The chain is Chaperonin GroEL from Mycobacterium asiaticum.